A 528-amino-acid chain; its full sequence is Negative elongation factor A (528 aa).

An HDAg domain is found at 89–248; sequence WVLMVADILK…TPIPPSRTLL (160 aa). The segment at 125-188 is NELF-C/D-binding; that stretch reads REKVGECEAS…LQKSTETAQQ (64 aa). A Phosphothreonine modification is found at T157. An RNAPII-binding region spans residues 189–248; the sequence is LKRSAGVPFHAKGRGLLRKMDTTTPLKGIPKQAPFRSPTAPSVFSPTGNRTPIPPSRTLL. A disordered region spans residues 215 to 245; sequence KGIPKQAPFRSPTAPSVFSPTGNRTPIPPSR. S225 and S233 each carry phosphoserine. The segment covering 227–238 has biased composition (polar residues); that stretch reads TAPSVFSPTGNR. T277 carries the post-translational modification Phosphothreonine. A compositionally biased stretch (low complexity) spans 320 to 341; it reads PSTSYLPSTPSVVPASSYIPSS. The tract at residues 320–409 is disordered; that stretch reads PSTSYLPSTP…PPAVAPTTQT (90 aa). S363 carries the post-translational modification Phosphoserine.

The protein belongs to the NELF-A family. The NELF complex is composed of NELFA, NELFB, NELFCD (isoform NELF-C or isoform NELF-D) and NELFE; NELFA and NELFCD form a stable subcomplex that binds to the N-terminus of NELFB. In vitro, the NELFA:NELFCD subcomplex binds to ssDNA and ssRNA in a sequence- and structure-dependent manner. Interacts with the RNA polymerase II complex when it is not phosphorylated by P-TEFb. Ubiquitous. Expressed in heart, brain, placenta, liver, skeletal muscle, kidney and pancreas. Expressed at lower level in adult lung. Expressed in fetal brain, lung, liver and kidney.

It is found in the nucleus. Functionally, essential component of the NELF complex, a complex that negatively regulates the elongation of transcription by RNA polymerase II. The NELF complex, which acts via an association with the DSIF complex and causes transcriptional pausing, is counteracted by the P-TEFb kinase complex. In terms of biological role, (Microbial infection) The NELF complex is involved in HIV-1 latency possibly involving recruitment of PCF11 to paused RNA polymerase II. This Homo sapiens (Human) protein is Negative elongation factor A (NELFA).